A 96-amino-acid polypeptide reads, in one-letter code: MCCTKSLLLAALMSVLLLHLCGESEAASNFDCCLGYTDRILHPKFIVGFTRQLANEGCDINAIIFHTKKKLSVCANPKQTWVKYIVRLLSKKVKNM.

Residues 1 to 26 form the signal peptide; the sequence is MCCTKSLLLAALMSVLLLHLCGESEA. Cystine bridges form between cysteine 32/cysteine 58 and cysteine 33/cysteine 74.

This sequence belongs to the intercrine beta (chemokine CC) family. In terms of processing, C-terminal processed forms which lack 1, 3 or 6 amino acids are produced by proteolytic cleavage after secretion from peripheral blood monocytes. Expressed in the seminal plasma, endometrial fluid and follicular fluid (at protein level). Expressed predominantly in the liver, lymph nodes, appendix, peripheral blood lymphocytes, and fetal lung. Low levels seen in thymus, prostate, testis, small intestine and colon.

The protein resides in the secreted. In terms of biological role, acts as a ligand for C-C chemokine receptor CCR6. Signals through binding and activation of CCR6 and induces a strong chemotactic response and mobilization of intracellular calcium ions. The ligand-receptor pair CCL20-CCR6 is responsible for the chemotaxis of dendritic cells (DC), effector/memory T-cells and B-cells and plays an important role at skin and mucosal surfaces under homeostatic and inflammatory conditions, as well as in pathology, including cancer and various autoimmune diseases. CCL20 acts as a chemotactic factor that attracts lymphocytes and, slightly, neutrophils, but not monocytes. Involved in the recruitment of both the pro-inflammatory IL17 producing helper T-cells (Th17) and the regulatory T-cells (Treg) to sites of inflammation. Required for optimal migration of thymic natural regulatory T cells (nTregs) and DN1 early thymocyte progenitor cells. C-terminal processed forms have been shown to be equally chemotactically active for leukocytes. Positively regulates sperm motility and chemotaxis via its binding to CCR6 which triggers Ca2+ mobilization in the sperm which is important for its motility. Inhibits proliferation of myeloid progenitors in colony formation assays. May be involved in formation and function of the mucosal lymphoid tissues by attracting lymphocytes and dendritic cells towards epithelial cells. Possesses antibacterial activity towards E.coli ATCC 25922 and S.aureus ATCC 29213. This chain is C-C motif chemokine 20 (CCL20), found in Homo sapiens (Human).